Reading from the N-terminus, the 348-residue chain is Putative serine/threonine-protein phosphatase C26H8.05c (348 aa).

Residues D53, H55, D81, and N113 each contribute to the Mn(2+) site. The active-site Proton donor is H114. Mn(2+) contacts are provided by H163 and H237. The disordered stretch occupies residues 259–282 (TNEEDSELDSDSASPVDDSPAPGD). A compositionally biased stretch (low complexity) spans 269-280 (DSASPVDDSPAP). S272 is subject to Phosphoserine. Leucine methyl ester is present on L348.

The protein belongs to the PPP phosphatase family. PP-1 subfamily. Mn(2+) serves as cofactor.

The protein localises to the cytoplasm. The protein resides in the nucleus. The enzyme catalyses O-phospho-L-seryl-[protein] + H2O = L-seryl-[protein] + phosphate. The catalysed reaction is O-phospho-L-threonyl-[protein] + H2O = L-threonyl-[protein] + phosphate. This chain is Putative serine/threonine-protein phosphatase C26H8.05c, found in Schizosaccharomyces pombe (strain 972 / ATCC 24843) (Fission yeast).